A 782-amino-acid chain; its full sequence is DNA repair and recombination protein RAD54-like (782 aa).

The segment covering 1 to 20 (MRRSLAPSQRGGQRLSSRND) has biased composition (polar residues). A disordered region spans residues 1–28 (MRRSLAPSQRGGQRLSSRNDFTPPLLKK). The tract at residues 2 to 9 (RRSLAPSQ) is required for chromatin remodeling, strand pairing activities and coupling of ATPase activity. T22 is subject to Phosphothreonine. The region spanning 168–343 (EGKRGNFNGC…FSLVNFVNPE (176 aa)) is the Helicase ATP-binding domain. 181–188 (DEMGLGKT) is an ATP binding site. A DEGH box motif is present at residues 294 to 297 (DEGH). The Helicase C-terminal domain maps to 501-658 (LLDFMLAAIR…NNESAEKHFT (158 aa)). Positions 741 to 753 (SQKIETTPATETS) are enriched in polar residues. The interval 741 to 782 (SQKIETTPATETSVEAKPEPERRKRPAMPLSDDSADEDFQGF) is disordered. Over residues 773–782 (DSADEDFQGF) the composition is skewed to acidic residues.

It belongs to the SNF2/RAD54 helicase family. As to quaternary structure, interacts (via N-terminus) with spn-A/Rad51.

The protein resides in the nucleus. Its function is as follows. Involved in mitotic DNA repair and meiotic recombination. Functions in the recombinational DNA repair pathway. Essential for interhomolog gene conversion (GC), but may have a less important role in intersister GC than spn-A/Rad51. In the presence of DNA, spn-A/Rad51 enhances the ATPase activity of okr/Rad54. This Drosophila pseudoobscura pseudoobscura (Fruit fly) protein is DNA repair and recombination protein RAD54-like.